A 124-amino-acid chain; its full sequence is Small ribosomal subunit protein uS11 (124 aa).

Belongs to the universal ribosomal protein uS11 family. In terms of assembly, part of the 30S ribosomal subunit.

Its function is as follows. Located on the platform of the 30S subunit. This Methanococcus aeolicus (strain ATCC BAA-1280 / DSM 17508 / OCM 812 / Nankai-3) protein is Small ribosomal subunit protein uS11.